A 218-amino-acid polypeptide reads, in one-letter code: Probable cutinase 3 (218 aa).

An N-terminal signal peptide occupies residues 1 to 17; the sequence is MSLRSVLVAALAALAVA. Cystine bridges form between Cys41-Cys120 and Cys67-Cys81. The Nucleophile role is filled by Ser131. Cys182 and Cys189 are disulfide-bonded. Asp186 is a catalytic residue. Residue His199 is the Proton donor/acceptor of the active site.

The protein belongs to the cutinase family.

It localises to the secreted. It carries out the reaction cutin + H2O = cutin monomers.. Functionally, catalyzes the hydrolysis of complex carboxylic polyesters found in the cell wall of plants. Degrades cutin, a macromolecule that forms the structure of the plant cuticle. In Aspergillus terreus (strain NIH 2624 / FGSC A1156), this protein is Probable cutinase 3.